The primary structure comprises 358 residues: Protein-glutamate methylesterase/protein-glutamine glutaminase 2 (358 aa).

Positions 7–124 (SVLLVDDSAV…KNFLIESAAE (118 aa)) constitute a Response regulatory domain. The residue at position 58 (Asp-58) is a 4-aspartylphosphate. Residues 170–358 (AQTTERIVAI…QEIHQAILHR (189 aa)) form the CheB-type methylesterase domain. Catalysis depends on residues Ser-182, His-208, and Asp-304.

This sequence belongs to the CheB family. In terms of processing, phosphorylated by CheA. Phosphorylation of the N-terminal regulatory domain activates the methylesterase activity.

The protein localises to the cytoplasm. The catalysed reaction is [protein]-L-glutamate 5-O-methyl ester + H2O = L-glutamyl-[protein] + methanol + H(+). It catalyses the reaction L-glutaminyl-[protein] + H2O = L-glutamyl-[protein] + NH4(+). In terms of biological role, involved in chemotaxis. Part of a chemotaxis signal transduction system that modulates chemotaxis in response to various stimuli. Catalyzes the demethylation of specific methylglutamate residues introduced into the chemoreceptors (methyl-accepting chemotaxis proteins or MCP) by CheR. Also mediates the irreversible deamidation of specific glutamine residues to glutamic acid. This chain is Protein-glutamate methylesterase/protein-glutamine glutaminase 2, found in Pseudomonas syringae pv. tomato (strain ATCC BAA-871 / DC3000).